A 257-amino-acid polypeptide reads, in one-letter code: Hydroxyacylglutathione hydrolase (257 aa).

Zn(2+) contacts are provided by His56, His58, Asp60, His61, His112, Asp131, and His169.

The protein belongs to the metallo-beta-lactamase superfamily. Glyoxalase II family. As to quaternary structure, monomer. Zn(2+) serves as cofactor.

It catalyses the reaction an S-(2-hydroxyacyl)glutathione + H2O = a 2-hydroxy carboxylate + glutathione + H(+). It functions in the pathway secondary metabolite metabolism; methylglyoxal degradation; (R)-lactate from methylglyoxal: step 2/2. Functionally, thiolesterase that catalyzes the hydrolysis of S-D-lactoyl-glutathione to form glutathione and D-lactic acid. This chain is Hydroxyacylglutathione hydrolase, found in Ectopseudomonas mendocina (strain ymp) (Pseudomonas mendocina).